We begin with the raw amino-acid sequence, 683 residues long: Cyclic nucleotide-gated channel alpha-1 (683 aa).

Residues 1–160 (MKTNIINTWH…PSGNMYYNWL (160 aa)) lie on the Cytoplasmic side of the membrane. A disordered region spans residues 34-144 (ACSSFSDNDN…PKEKKEEEKK (111 aa)). The span at 105–144 (SKADDKKESKKDPEKKKKKEKEKEKKKEEKPKEKKEEEKK) shows a compositional bias: basic and acidic residues. A helical membrane pass occupies residues 161-182 (FCITLPVMYNWTMIIARACFDE). Over 183–192 (LQSDYLEYWL) the chain is Extracellular. The chain crosses the membrane as a helical span at residues 193 to 213 (IFDYVSDVVYLADMFVRTRTG). Residues 214-238 (YLEQGLLVKDELKLIEKYKANLQFK) are Cytoplasmic-facing. A helical transmembrane segment spans residues 239–257 (LDVLSVIPTDLLYFKFGWN). The Extracellular portion of the chain corresponds to 258–262 (YPEIR). Residues 263 to 281 (LNRLLRISRMFEFFQRTET) traverse the membrane as a helical segment. The Cytoplasmic segment spans residues 282–288 (RTNYPNI). The tract at residues 286–394 (PNIFRISNLV…GNIGSMISNM (109 aa)) is ion conduction pathway. The chain crosses the membrane as a helical span at residues 289–312 (FRISNLVMYIVIIIHWNACVYYSI). The Extracellular segment spans residues 313–335 (SKAIGFGNDTWVYPDVNDPEFGR). An N-linked (GlcNAc...) asparagine glycan is attached at Asn-320. 2 helical membrane passes run 336–370 (LARKYVYSLYWSTLTLTTIGETPPPVLDSEYVFVV) and 371–395 (VDFLIGVLIFATIVGNIGSMISNMN). Residues 353–356 (TIGE) form a selectivity filter region. The segment at 396–472 (AARAEFQSRV…DTLKKVRIFA (77 aa)) is C-linker. The Cytoplasmic portion of the chain corresponds to 396–683 (AARAEFQSRV…ESEPTESLQG (288 aa)). Residues 476–596 (AGLLVELVLK…EEKGRQILMK (121 aa)) are cyclic nucleotide-binding domain. Gly-536, Ser-539, Arg-552, and Thr-553 together coordinate 3',5'-cyclic GMP. Positions 552 and 553 each coordinate 3',5'-cyclic AMP. Residues 614–668 (LEEKVTRMEGSVDLLQTRFARILAEYESMQQKLKQRLTKVEKFLKPLIETEFSAL) are a coiled coil.

This sequence belongs to the cyclic nucleotide-gated cation channel (TC 1.A.1.5) family. CNGA1 subfamily. As to quaternary structure, forms heterotetrameric channels composed of CNGA1 and CNGB1 subunits with 3:1 stoichiometry. May also form cyclic nucleotide-activated homotetrameric channels, that are efficiently activated by saturating cGMP, but poorly activated by saturating cAMP compared to the heterotetramer with CNGB1. The channel binds Ca(2+)-bound CALM1 via CaM1 and CaM2 regions of the CNGB1 subunit; this interaction modulates the affinity of the channel for cNMPs in response to intracellular Ca(2+) levels. In terms of tissue distribution, rod cells in the retina.

The protein resides in the cell membrane. It carries out the reaction Ca(2+)(in) = Ca(2+)(out). The enzyme catalyses Na(+)(in) = Na(+)(out). The catalysed reaction is K(+)(in) = K(+)(out). It catalyses the reaction NH4(+)(in) = NH4(+)(out). It carries out the reaction Rb(+)(in) = Rb(+)(out). The enzyme catalyses Li(+)(in) = Li(+)(out). The catalysed reaction is Cs(+)(in) = Cs(+)(out). Its function is as follows. Pore-forming subunit of the rod cyclic nucleotide-gated channel. Mediates rod photoresponses at dim light converting transient changes in intracellular cGMP levels into electrical signals. In the dark, cGMP levels are high and keep the channel open enabling a steady inward current carried by Na(+) and Ca(2+) ions that leads to membrane depolarization and neurotransmitter release from synaptic terminals. Upon photon absorption cGMP levels decline leading to channel closure and membrane hyperpolarization that ultimately slows neurotransmitter release and signals the presence of light, the end point of the phototransduction cascade. Conducts cGMP- and cAMP-gated ion currents, with permeability for monovalent and divalent cations. The selectivity for Ca(2+) over Na(+) increases with cGMP concentrations, whereas the selectivity among monovalent ions is independent of the cGMP levels. This chain is Cyclic nucleotide-gated channel alpha-1, found in Rattus norvegicus (Rat).